A 295-amino-acid chain; its full sequence is uncharacterized protein (295 aa).

The N-terminal stretch at 1 to 19 (MHKLLLIITVFSTFNVAQA) is a signal peptide.

This is an uncharacterized protein from Rickettsia typhi (strain ATCC VR-144 / Wilmington).